We begin with the raw amino-acid sequence, 341 residues long: MQGYSLLELAQQIGATIRGNADVIVTDIAPLDKADNNQLTFISNPKFREHLLQSQAGALIVTESDIEFCSAQSNLLVVKDPYVAYAILAQYMDSTPKAAQGIHQSAVVSDTATLGQHVSIGANAVIEDGVILGDNVVIGAGCFIGKHVQIGENTQLWANVNIYHDVKIGSDCLIQSGAVIGSDGFGYANDRGRWIKIPQTGTVIIGNHVEIGACTCIDRGALDATVIEDNVIIDNLCQIAHNVHIGTGTAVAGGVIMAGSLKVGRYCLIGGASVINGHMEICDKVTITGMGMVMRPITEPGIYSSGIPLQPNKVWRKTAALTLDIDKINKRLKAVEKKLAE.

Catalysis depends on His-241, which acts as the Proton acceptor.

This sequence belongs to the transferase hexapeptide repeat family. LpxD subfamily. In terms of assembly, homotrimer.

The enzyme catalyses a UDP-3-O-[(3R)-3-hydroxyacyl]-alpha-D-glucosamine + a (3R)-hydroxyacyl-[ACP] = a UDP-2-N,3-O-bis[(3R)-3-hydroxyacyl]-alpha-D-glucosamine + holo-[ACP] + H(+). It participates in bacterial outer membrane biogenesis; LPS lipid A biosynthesis. In terms of biological role, catalyzes the N-acylation of UDP-3-O-acylglucosamine using 3-hydroxyacyl-ACP as the acyl donor. Is involved in the biosynthesis of lipid A, a phosphorylated glycolipid that anchors the lipopolysaccharide to the outer membrane of the cell. The polypeptide is UDP-3-O-acylglucosamine N-acyltransferase (Histophilus somni (strain 129Pt) (Haemophilus somnus)).